The following is a 400-amino-acid chain: MSESVRTNTSIWSKGMLSVIVAQFLSAFGDNALLFATLALLKAQFYPDWSQPVLQMVFVGAYILFAPFVGQIADSFAKGRVMMVANGLKLAGAAGICLGVNPFVGYTLVGIGAAAYSPAKYGILGELTTGDKLVKANGLMEASTIAAILLGSVAGGVLADWHVIAALVACALAYAGAVAANLFIPKLVAARPGQSWRLSAMTRSCFSACVVLWSNGETRFSLVGTGLFWGAGVTLRFLLVLWVPVALGITDNATPTYLNAMVAVGIVVGAGAAAKLVTLETVSRCMPAGILIGVVVAIFSLQHALLPAYALLLLIGMLGGFFVVPLNALLQERGKKSVGAGNAIAVQNLGENSAMLLMLGLYSLAVLVGVPAVAIGIGFGVLFALAIAALWIWQRRQASY.

11 consecutive transmembrane segments (helical) span residues 19–39 (VIVAQFLSAFGDNALLFATLA), 53–73 (VLQMVFVGAYILFAPFVGQIA), 91–111 (AGAAGICLGVNPFVGYTLVGI), 139–159 (LMEASTIAAILLGSVAGGVLA), 164–184 (IAALVACALAYAGAVAANLFI), 227–247 (LFWGAGVTLRFLLVLWVPVAL), 257–277 (YLNAMVAVGIVVGAGAAAKLV), 281–301 (TVSRCMPAGILIGVVVAIFSL), 304–324 (ALLPAYALLLLIGMLGGFFVV), 352–372 (NSAMLLMLGLYSLAVLVGVPA), and 373–393 (VAIGIGFGVLFALAIAALWIW).

Belongs to the major facilitator superfamily. LplT (TC 2.A.1.42) family.

It localises to the cell inner membrane. Catalyzes the facilitated diffusion of 2-acyl-glycero-3-phosphoethanolamine (2-acyl-GPE) into the cell. The polypeptide is Lysophospholipid transporter LplT (Salmonella gallinarum (strain 287/91 / NCTC 13346)).